The sequence spans 281 residues: 4-deoxy-L-threo-5-hexosulose-uronate ketol-isomerase (281 aa).

Residues His-198, His-200, Glu-205, and His-248 each coordinate Zn(2+).

It belongs to the KduI family. Zn(2+) is required as a cofactor.

The enzyme catalyses 5-dehydro-4-deoxy-D-glucuronate = 3-deoxy-D-glycero-2,5-hexodiulosonate. The protein operates within glycan metabolism; pectin degradation; 2-dehydro-3-deoxy-D-gluconate from pectin: step 4/5. Catalyzes the isomerization of 5-dehydro-4-deoxy-D-glucuronate to 3-deoxy-D-glycero-2,5-hexodiulosonate. The protein is 4-deoxy-L-threo-5-hexosulose-uronate ketol-isomerase of Lacticaseibacillus paracasei (strain ATCC 334 / BCRC 17002 / CCUG 31169 / CIP 107868 / KCTC 3260 / NRRL B-441) (Lactobacillus paracasei).